Consider the following 80-residue polypeptide: U-Asilidin(1)-Dg12 (80 aa).

Residues 1–24 (MARLLVVSVGVFLAVIMLSSETMS) form the signal peptide. A propeptide spanning residues 25–46 (LPAGENLPALTLFEAQNQLIGL) is cleaved from the precursor. 3 cysteine pairs are disulfide-bonded: Cys-53–Cys-67, Cys-60–Cys-71, and Cys-66–Cys-78.

The protein belongs to the asilidin-1 family. In terms of tissue distribution, expressed by the venom gland.

The protein localises to the secreted. Its function is as follows. Neurotoxin that may modulate ions channels (other than those tested). In vivo, induces neurotoxic effects when injected into insects (tested on L.cuprina and A.domesticus). This chain is U-Asilidin(1)-Dg12, found in Dolopus genitalis (Giant Australian assassin fly).